Consider the following 204-residue polypeptide: Protein Mis18-alpha (204 aa).

Phosphoserine is present on residues Ser13, Ser16, and Ser17. Residues Pro51–Leu149 enclose the Mis18 domain. Positions 56, 59, 112, and 115 each coordinate Zn(2+). Residue Lys133 forms a Glycyl lysine isopeptide (Lys-Gly) (interchain with G-Cter in SUMO2) linkage. Ser204 is modified (phosphoserine).

This sequence belongs to the mis18 family. Homodimer, and heterodimer with OIP5/MIS18B. Identified in a complex containing MIS18A, OIP5/MIS18B, MIS18BP1, RBBP7 and RBBP4.

It is found in the nucleus. Its subcellular location is the chromosome. It localises to the centromere. Its function is as follows. Required for recruitment of CENPA to centromeres and normal chromosome segregation during mitosis. This Mus musculus (Mouse) protein is Protein Mis18-alpha (Mis18a).